Reading from the N-terminus, the 197-residue chain is ATP-dependent Clp protease proteolytic subunit (197 aa).

Residue serine 102 is the Nucleophile of the active site. Histidine 127 is a catalytic residue.

This sequence belongs to the peptidase S14 family. In terms of assembly, fourteen ClpP subunits assemble into 2 heptameric rings which stack back to back to give a disk-like structure with a central cavity, resembling the structure of eukaryotic proteasomes.

It localises to the cytoplasm. The enzyme catalyses Hydrolysis of proteins to small peptides in the presence of ATP and magnesium. alpha-casein is the usual test substrate. In the absence of ATP, only oligopeptides shorter than five residues are hydrolyzed (such as succinyl-Leu-Tyr-|-NHMec, and Leu-Tyr-Leu-|-Tyr-Trp, in which cleavage of the -Tyr-|-Leu- and -Tyr-|-Trp bonds also occurs).. Cleaves peptides in various proteins in a process that requires ATP hydrolysis. Has a chymotrypsin-like activity. Plays a major role in the degradation of misfolded proteins. The polypeptide is ATP-dependent Clp protease proteolytic subunit (Borreliella afzelii (strain PKo) (Borrelia afzelii)).